The sequence spans 827 residues: Glycerol-3-phosphate acyltransferase (827 aa).

Residues 325-330 (CHRSHM) carry the HXXXXD motif motif.

Belongs to the GPAT/DAPAT family.

It is found in the cell inner membrane. The catalysed reaction is sn-glycerol 3-phosphate + an acyl-CoA = a 1-acyl-sn-glycero-3-phosphate + CoA. It functions in the pathway phospholipid metabolism; CDP-diacylglycerol biosynthesis; CDP-diacylglycerol from sn-glycerol 3-phosphate: step 1/3. In Shigella flexneri serotype 5b (strain 8401), this protein is Glycerol-3-phosphate acyltransferase.